The chain runs to 52 residues: Thiocillin (52 aa).

The propeptide occupies 1 to 38 (MSEIKKALNTLEIEDFDAIEMVDVDAMPENEALEIMGA). A cross-link (thiazole-4-carboxylic acid (Ser-Cys)) is located at residues 39 to 40 (SC). A cross-link (pyridine-2,5-dicarboxylic acid (Ser-Cys) (with S-48)) is located at residues 39–47 (SCTTCVCTC). The segment at residues 39–48 (SCTTCVCTCS) is a cross-link (pyridine-2,5-dicarboxylic acid (Ser-Ser) (with C-47)). (Z)-2,3-didehydrobutyrine is present on Thr42. Positions 42–43 (TC) form a cross-link, thiazole-4-carboxylic acid (Thr-Cys). Val44 carries the post-translational modification 3-hydroxyvaline (Val); partial. Residues 44–45 (VC) constitute a cross-link (thiazole-4-carboxylic acid (Val-Cys)). The residue at position 46 (Thr46) is an O-methylthreonine; partial. Residues 46-47 (TC) constitute a cross-link (thiazole-4-carboxylic acid (Thr-Cys)). Positions 48–49 (SC) form a cross-link, thiazole-4-carboxylic acid (Ser-Cys). Positions 49 to 50 (CC) form a cross-link, thiazole-4-carboxylic acid (Cys-Cys). Position 51 is a (Z)-2,3-didehydrobutyrine (Thr51). The residue at position 52 (Thr52) is a 1-amino-2-propanone; alternate. A Decarboxylated threonine; alternate modification is found at Thr52.

Belongs to the thiocillin family. In terms of processing, maturation of thiazole and oxazole containing antibiotics involves the enzymatic condensation of a Cys, Ser or Thr with the alpha-carbonyl of the preceding amino acid to form a thioether or ether bond, then dehydration to form a double bond with the alpha-amino nitrogen. Thiazoline or oxazoline ring are dehydrogenated to form thiazole or oxazole rings. Post-translationally, maturation of pyridinyl containing antibiotics involves the cross-linking of a Ser and a Cys-Ser pair usually separated by 7 or 8 residues along the peptide chain. The Ser residues are dehydrated to didehydroalanines, then bonded between their beta carbons. The alpha carbonyl of the Cys condenses with alpha carbon of the first Ser to form a pyridinyl ring. The ring may be multiply dehydrogenated to form a pyridine ring with loss of the amino nitrogen of the first Ser. The 8 possible modification isomers, differing in the presence of modifications at three positions, have been characterized in PubMed:19196969. Val-44 is modified to 3-hydroxyvaline in forms thiocillin I, thiocillin II, YM-266183, and YM-266184. Thr-46 is modified to O-methylthreonine in forms thiocillin II, thiocillin III, thiocillin IV, and YM-266184. Thr-52 is decarboxylated to (R)-1-aminopropan-2-ol in forms micrococcin P1, thiocillin I, thiocillin II, and thiocillin III. Thr-52 is decarboxylated and oxidized to 1-amino-2-propanone in forms micrococcin P2, YM-266183, YM-266184. and thiocillin IV. In terms of processing, the structure of 2,3-didehydrobutyrines is not discussed in PubMed:19196969. However, in Fig. 3 the residues are diagrammed as Z-isomers.

The protein resides in the secreted. Has bacteriocidal activity against Gram-positive bacteria, but not against Gram-negative bacteria. Inhibits bacterial protein biosynthesis by acting on the elongation factor Tu (EF-Tu). This is Thiocillin from Bacillus cereus (strain ATCC 14579 / DSM 31 / CCUG 7414 / JCM 2152 / NBRC 15305 / NCIMB 9373 / NCTC 2599 / NRRL B-3711).